Reading from the N-terminus, the 536-residue chain is CTP synthase (536 aa).

Positions 1–266 (MKTKFIFVTG…DEQVVEKLNI (266 aa)) are amidoligase domain. Residue Ser-14 participates in CTP binding. Residue Ser-14 coordinates UTP. ATP-binding positions include 15 to 20 (SIGKGL) and Asp-72. Mg(2+) is bound by residues Asp-72 and Glu-140. Residues 147 to 149 (DIE), 187 to 192 (KTKPTQ), and Lys-223 contribute to the CTP site. Residues 187-192 (KTKPTQ) and Lys-223 each bind UTP. One can recognise a Glutamine amidotransferase type-1 domain in the interval 292 to 534 (RIAIVGKYVN…IAAALDRKDK (243 aa)). Residue Gly-354 coordinates L-glutamine. Cys-381 acts as the Nucleophile; for glutamine hydrolysis in catalysis. L-glutamine-binding positions include 382–385 (LGMQ), Glu-405, and Arg-462. Catalysis depends on residues His-507 and Glu-509.

The protein belongs to the CTP synthase family. As to quaternary structure, homotetramer.

The enzyme catalyses UTP + L-glutamine + ATP + H2O = CTP + L-glutamate + ADP + phosphate + 2 H(+). It catalyses the reaction L-glutamine + H2O = L-glutamate + NH4(+). The catalysed reaction is UTP + NH4(+) + ATP = CTP + ADP + phosphate + 2 H(+). It participates in pyrimidine metabolism; CTP biosynthesis via de novo pathway; CTP from UDP: step 2/2. With respect to regulation, allosterically activated by GTP, when glutamine is the substrate; GTP has no effect on the reaction when ammonia is the substrate. The allosteric effector GTP functions by stabilizing the protein conformation that binds the tetrahedral intermediate(s) formed during glutamine hydrolysis. Inhibited by the product CTP, via allosteric rather than competitive inhibition. In terms of biological role, catalyzes the ATP-dependent amination of UTP to CTP with either L-glutamine or ammonia as the source of nitrogen. Regulates intracellular CTP levels through interactions with the four ribonucleotide triphosphates. This is CTP synthase from Geobacter sulfurreducens (strain ATCC 51573 / DSM 12127 / PCA).